We begin with the raw amino-acid sequence, 524 residues long: Solute carrier family 40 member 1 (524 aa).

The span at 1–18 (MENETELRVVHQEEQQRE) shows a compositional bias: basic and acidic residues. A disordered region spans residues 1 to 30 (MENETELRVVHQEEQQREEGEDESQPQNPP). The next 11 helical transmembrane spans lie at 70 to 92 (SLLL…GPIV), 109 to 129 (LLFQ…LLLV), 137 to 157 (LPVF…GVLS), 191 to 211 (GIDL…ISFV), 218 to 238 (ITFA…FISV), 314 to 334 (VVLP…FGTL), 347 to 367 (YIIG…TLVY), 380 to 400 (GLWS…SIWV), 409 to 429 (MLMA…LAVI), 446 to 466 (GVQN…GIIV), and 472 to 492 (FWIL…LYTI).

Belongs to the ferroportin (FP) (TC 2.A.100) family. SLC40A subfamily.

It is found in the membrane. Its function is as follows. May be involved in iron transport and iron homeostasis. The chain is Solute carrier family 40 member 1 (IREG1) from Arabidopsis thaliana (Mouse-ear cress).